A 507-amino-acid polypeptide reads, in one-letter code: Glutamate--tRNA ligase (507 aa).

The short motif at 14 to 24 is the 'HIGH' region element; sequence PSPTGPLHIGG. A 'KMSKS' region motif is present at residues 262 to 266; that stretch reads KLSKR. K265 is a binding site for ATP.

The protein belongs to the class-I aminoacyl-tRNA synthetase family. Glutamate--tRNA ligase type 1 subfamily. In terms of assembly, monomer.

The protein localises to the cytoplasm. It catalyses the reaction tRNA(Glu) + L-glutamate + ATP = L-glutamyl-tRNA(Glu) + AMP + diphosphate. In terms of biological role, catalyzes the attachment of glutamate to tRNA(Glu) in a two-step reaction: glutamate is first activated by ATP to form Glu-AMP and then transferred to the acceptor end of tRNA(Glu). In Porphyromonas gingivalis (strain ATCC 33277 / DSM 20709 / CIP 103683 / JCM 12257 / NCTC 11834 / 2561), this protein is Glutamate--tRNA ligase.